Consider the following 396-residue polypeptide: Probable sugar efflux transporter (396 aa).

Residues 1 to 14 lie on the Cytoplasmic side of the membrane; sequence MTINPVSRKVAWLR. A helical transmembrane segment spans residues 15 to 35; that stretch reads VVTLAIAAFIFNTTEFVPVGL. Over 36 to 49 the chain is Periplasmic; the sequence is LSDIAESFHMQTAQ. Residues 50–70 traverse the membrane as a helical segment; it reads VGIMLTIYAWVVAVMSLPFML. Topologically, residues 71-80 are cytoplasmic; it reads LTSQMERRKL. Residues 81–101 form a helical membrane-spanning segment; sequence LIYLFVLFIASHVLSFLAWNF. Residue T102 is a topological domain, periplasmic. A helical membrane pass occupies residues 103–123; the sequence is VLVISRIGIAFAHAIFWSITA. The Cytoplasmic portion of the chain corresponds to 124–135; the sequence is SLAIRLAPAGKR. The chain crosses the membrane as a helical span at residues 136–156; that stretch reads AQALSLIATGTALAMVLGLPI. The Periplasmic portion of the chain corresponds to 157–168; sequence GRVVGQYFGWRT. The helical transmembrane segment at 169–189 threads the bilayer; sequence TFFAIGMGALITLLCLIKLLP. At 190 to 208 the chain is on the cytoplasmic side; that stretch reads KLPSEHSGSLKSLPLLFRR. A helical membrane pass occupies residues 209–229; sequence PALMSLYVLTVVVVTAHYTAY. At 230–245 the chain is on the periplasmic side; that stretch reads SYIEPFVQNVAGLSAN. A helical membrane pass occupies residues 246–266; sequence FATVLLLILGGAGIIGSLVFG. Over 267-274 the chain is Cytoplasmic; sequence KLGNRHAS. Residues 275-295 form a helical membrane-spanning segment; it reads SLVSIAIALLVVCLLLLLPAA. Topologically, residues 296-300 are periplasmic; the sequence is ESEAH. Residues 301–321 traverse the membrane as a helical segment; it reads LAILSIFWGIAIMVIGLGMQV. Topologically, residues 322–332 are cytoplasmic; the sequence is KVLALAPDATD. A helical membrane pass occupies residues 333 to 353; it reads VAMALFSGIFNIGIGAGALVG. Over 354–363 the chain is Periplasmic; sequence NQVSLHWSMS. Residues 364–384 form a helical membrane-spanning segment; sequence AIGYIGAIPACAALVWAVLIF. Residues 385–396 lie on the Cytoplasmic side of the membrane; the sequence is RKWPVTLEEQPH.

Belongs to the major facilitator superfamily. SotB (TC 2.A.1.2) family.

The protein localises to the cell inner membrane. Involved in the efflux of sugars. The physiological role may be the reduction of the intracellular concentration of toxic sugars or sugar metabolites. The polypeptide is Probable sugar efflux transporter (Salmonella typhimurium (strain LT2 / SGSC1412 / ATCC 700720)).